A 243-amino-acid chain; its full sequence is uncharacterized protein (243 aa).

Residues 157–181 (SEETKEQPDATTSEKSRSPECPKTT) are disordered.

This is an uncharacterized protein from Rattus norvegicus (Rat).